A 326-amino-acid polypeptide reads, in one-letter code: Polycomb complex protein BMI-1 (326 aa).

The RING-type zinc-finger motif lies at 18-57; sequence CVLCGGYFIDATTIIECLHSFCKTCIVRYLETSKYCPICD. The Nuclear localization signal motif lies at 81-95; that stretch reads KLVPGLFKNEMKRRR. The interaction with PHC2 stretch occupies residues 162–182; sequence RYLRCPAAMTVMHLRKFLRSK. The interaction with E4F1 stretch occupies residues 164 to 228; that stretch reads LRCPAAMTVM…GPLPLKYRVR (65 aa). Residues 236–326 form a disordered region; sequence ISHQRDGLTN…VNGSSATSSG (91 aa). The segment covering 266 to 278 has biased composition (low complexity); it reads PSTSSCLPSPSTP. Over residues 279 to 309 the composition is skewed to polar residues; it reads VQSPHPQFPHISSTMNGTSNSPSGNHQSSFA. The segment covering 315–326 has biased composition (low complexity); that stretch reads SSVNGSSATSSG.

Component of a PRC1-like complex. Identified in a PRC1-like HPRC-H complex with CBX2, CBX4, CBX8, PHC1, PHC2, PHC3 RING1 and RNF2. Interacts with RNF2/RING2. Interacts with RING1. Part of a complex that contains RNF2, UB2D3 and BMI1, where RNF2 and BMI1 form a tight heterodimer, and UB2D3 interacts only with RNF2. The complex composed of RNF2, UB2D3 and BMI1 binds nucleosomes, and has activity only with nucleosomal histone H2A. Interacts with CBX7 and CBX8. Interacts with SPOP. Part of a complex consisting of BMI1, CUL3 and SPOP. Interacts with E4F1. Interacts with PHC2. Interacts with zinc finger protein ZNF277. May be part of a complex including at least ZNF277, BMI1 and RNF2/RING2. Monoubiquitinated. May be polyubiquitinated; which does not lead to proteasomal degradation.

Its subcellular location is the nucleus. The protein localises to the cytoplasm. Component of a Polycomb group (PcG) multiprotein PRC1-like complex, a complex class required to maintain the transcriptionally repressive state of many genes, including Hox genes, throughout development. PcG PRC1 complex acts via chromatin remodeling and modification of histones; it mediates monoubiquitination of histone H2A 'Lys-119', rendering chromatin heritably changed in its expressibility. The complex composed of RNF2, UB2D3 and BMI1 binds nucleosomes, and has activity only with nucleosomal histone H2A. In the PRC1-like complex, regulates the E3 ubiquitin-protein ligase activity of RNF2/RING2. In Homo sapiens (Human), this protein is Polycomb complex protein BMI-1 (BMI1).